Reading from the N-terminus, the 145-residue chain is D-aminoacyl-tRNA deacylase (145 aa).

A Gly-cisPro motif, important for rejection of L-amino acids motif is present at residues 137–138; that stretch reads GP.

The protein belongs to the DTD family. As to quaternary structure, homodimer.

The protein localises to the cytoplasm. It carries out the reaction glycyl-tRNA(Ala) + H2O = tRNA(Ala) + glycine + H(+). The catalysed reaction is a D-aminoacyl-tRNA + H2O = a tRNA + a D-alpha-amino acid + H(+). Functionally, an aminoacyl-tRNA editing enzyme that deacylates mischarged D-aminoacyl-tRNAs. Also deacylates mischarged glycyl-tRNA(Ala), protecting cells against glycine mischarging by AlaRS. Acts via tRNA-based rather than protein-based catalysis; rejects L-amino acids rather than detecting D-amino acids in the active site. By recycling D-aminoacyl-tRNA to D-amino acids and free tRNA molecules, this enzyme counteracts the toxicity associated with the formation of D-aminoacyl-tRNA entities in vivo and helps enforce protein L-homochirality. This Salmonella agona (strain SL483) protein is D-aminoacyl-tRNA deacylase.